Here is a 97-residue protein sequence, read N- to C-terminus: ESAT-6-like protein EsxS (97 aa).

The protein belongs to the WXG100 family. CFP-10 subfamily. Forms a tight complex with EsxR. Exists in heterodimeric and heterotetrameric forms.

Its subcellular location is the secreted. The protein is ESAT-6-like protein EsxS of Mycobacterium tuberculosis (strain ATCC 25618 / H37Rv).